A 439-amino-acid chain; its full sequence is Ribosomal protein uS12 methylthiotransferase RimO (439 aa).

An MTTase N-terminal domain is found at 5–116 (PTIAISHLGC…IVNVIERVEL (112 aa)). Residues cysteine 14, cysteine 50, cysteine 79, cysteine 154, cysteine 158, and cysteine 161 each coordinate [4Fe-4S] cluster. Positions 140–369 (TTTEGVAYLR…MELQQPISQK (230 aa)) constitute a Radical SAM core domain. Residues 372–438 (QQEVGKIVDV…TYDLYGQVVN (67 aa)) enclose the TRAM domain.

The protein belongs to the methylthiotransferase family. RimO subfamily. [4Fe-4S] cluster serves as cofactor.

It is found in the cytoplasm. The catalysed reaction is L-aspartate(89)-[ribosomal protein uS12]-hydrogen + (sulfur carrier)-SH + AH2 + 2 S-adenosyl-L-methionine = 3-methylsulfanyl-L-aspartate(89)-[ribosomal protein uS12]-hydrogen + (sulfur carrier)-H + 5'-deoxyadenosine + L-methionine + A + S-adenosyl-L-homocysteine + 2 H(+). Its function is as follows. Catalyzes the methylthiolation of an aspartic acid residue of ribosomal protein uS12. The polypeptide is Ribosomal protein uS12 methylthiotransferase RimO (Nostoc punctiforme (strain ATCC 29133 / PCC 73102)).